We begin with the raw amino-acid sequence, 79 residues long: Small ribosomal subunit protein bS18 (79 aa).

The protein belongs to the bacterial ribosomal protein bS18 family. As to quaternary structure, part of the 30S ribosomal subunit. Forms a tight heterodimer with protein bS6.

In terms of biological role, binds as a heterodimer with protein bS6 to the central domain of the 16S rRNA, where it helps stabilize the platform of the 30S subunit. The sequence is that of Small ribosomal subunit protein bS18 from Bradyrhizobium sp. (strain BTAi1 / ATCC BAA-1182).